The primary structure comprises 411 residues: Methyl-CpG-binding domain protein 2 (411 aa).

The required for interaction with DHX9 and PRMT5 stretch occupies residues 1-149 (MRAHPGGGRC…GPRATESGKR (149 aa)). The interval 1–158 (MRAHPGGGRC…RMDCPALPPG (158 aa)) is disordered. A compositionally biased stretch (basic residues) spans 77-95 (GRGRGRGRGRGRGRGRGRG). Gly residues predominate over residues 98-121 (PSGGSGLGGDGGGCGGGGSGGGGA). The MBD domain occupies 145–213 (ESGKRMDCPA…SSFDFRTGKM (69 aa)). A Phosphoserine modification is found at S181. The segment at 214 to 241 (MPSKLQKNKQRLRNDPLNQNKGKPDLNT) is disordered. Polar residues predominate over residues 229-241 (PLNQNKGKPDLNT). Phosphoserine is present on S407.

As to quaternary structure, heterodimer with MBD3 (via N-terminus). Component of the MeCP1 complex that contains HDAC1 and HDAC2. Component of the nucleosome remodeling and deacetylase (NuRD) repressor complex, composed of core proteins MTA1, MTA2, MTA3, RBBP4, RBBP7, HDAC1, HDAC2, MBD2, MBD3, and peripherally associated proteins CDK2AP1, CDK2AP2, GATAD2A, GATAD2B, CHD3, CHD4 and CHD5. The exact stoichiometry of the NuRD complex is unknown, and some subunits such as MBD2 and MBD3, GATAD2A and GATAD2B, and CHD3, CHD4 and CHD5 define mutually exclusive NuRD complexes. Interacts with CDK2AP1. Interacts with DHX9. Interacts with DNMT1. Interacts with GATAD2A/p66-alpha. Interacts with GATAD2B/p66-beta. Interacts with GPN1. Interacts with MIZF. Interacts with PRMT5. Interacts with SIN3A. Interacts with SPHK2. Highly expressed in brain, heart, kidney, stomach, testis and placenta.

The protein localises to the nucleus. The protein resides in the chromosome. In terms of biological role, binds CpG islands in promoters where the DNA is methylated at position 5 of cytosine within CpG dinucleotides. Binds hemimethylated DNA as well. Recruits histone deacetylases and DNA methyltransferases to chromatin. Acts as a component of the histone deacetylase NuRD complex which participates in the remodeling of chromatin. Acts as a transcriptional repressor and plays a role in gene silencing. Functions as a scaffold protein, targeting GATAD2A and GATAD2B to chromatin to promote repression. May enhance the activation of some unmethylated cAMP-responsive promoters. The protein is Methyl-CpG-binding domain protein 2 of Homo sapiens (Human).